The sequence spans 1342 residues: MVYSYTEKKRIRKDFGKRPQVLDVPYLLSIQLDSFQKFIEQDPEGQYGLEAAFRSVFPIQSYSGNSELQYVSYRLGEPVFDVQECQIRGVTYSAPLRVKLRLVIYEREAPEGTVKDIKEQEVYMGEIPLMTDNGTFVINGTERVIVSQLHRSPGVFFDSDKGKTHSSGKVLYNARIIPYRGSWLDFEFDPKDNLFVRIDRRRKLPATIILRALNYTTEQILDLFFEKVIFEIRDNKLQMELVPERLRGETASFDIEANGKVYVEKGRRITARHIRQLEKDDVKLIEVPVEYIAGKVVAKDYIDESTGELICAANMELSLDLLAKLSQSGHKRIETLFTNDLDHGPYISETLRVDPTNDRLSALVEIYRMMRPGEPPTREAAESLFENLFFSEDRYDLSAVGRMKFNRSLLRDEIEGSGILSKDDIIDVMKKLIDIRNGKGEVDDIDHLGNRRIRSVGEMAENQFRVGLVRVERAVKERLSLGDLDTLMPQDMINAKPISAAVKEFFGSSQLSQFMDQNNPLSEITHKRRISALGPGGLTRERAGFEVRDVHPTHYGRVCPIETPEGPNIGLINSLSVYAQTNEYGFLETPYRKVIDGVVTDEIHYLSAIEEGNYVIAQANSNLDEEGHFVEDLVTCRSKGESSLFSRDQVDYMDVSTQQVVSVGASLIPFLEHDDANRALMGANMQRQAVPTLRADKPLVGTGMERAVAVDSGVTAVAKRGGVVQYVDASRIVIKVNEDEMYPGEAGIDIYNLTKYTRSNQNTCINQMPCVSLGEPVERGDVLADGPSTDLGELALGQNMRVAFMPWNGYNFEDSILVSERVVQEDRFTTIHIQELACVSRDTKLGPEEITADIPNVGEAALSKLDESGIVYIGAEVTGGDILVGKVTPKGETQLTPEEKLLRAIFGEKASDVKDSSLRVPNGVSGTVIDVQVFTRDGVEKDKRALEIEEMQLKQAKKDLSEELQILEAGLFSRIRAVLVAGGVEAEKLDKLPRDRWLELGLTDEEKQNQLEQLAEQYDELKHEFEKKLEAKRRKITQGDDLAPGVLKIVKVYLAVKRRIQPGDKMAGRHGNKGVISKINPIEDMPYDENGTPVDIVLNPLGVPSRMNIGQILETHLGMAAKGIGDKINAMLKQQQEVAKLREFIQRAYDLGADVRQKVDLSTFSDEEVMRLAENLRKGMPIATPVFDGAKEAEIKELLKLGDLPTSGQIRLYDGRTGEQFERPVTVGYMYMLKLNHLVDDKMHARSTGSYSLVTQQPLGGKAQFGGQRFGEMEVWALEAYGAAYTLQEMLTVKSDDVNGRTKMYKNIVDGNHQMEPGMPESFNVLLKEIRSLGINIELEDE.

N6-acetyllysine is present on residues K1022 and K1200.

This sequence belongs to the RNA polymerase beta chain family. As to quaternary structure, the RNAP catalytic core consists of 2 alpha, 1 beta, 1 beta' and 1 omega subunit. When a sigma factor is associated with the core the holoenzyme is formed, which can initiate transcription.

The enzyme catalyses RNA(n) + a ribonucleoside 5'-triphosphate = RNA(n+1) + diphosphate. DNA-dependent RNA polymerase catalyzes the transcription of DNA into RNA using the four ribonucleoside triphosphates as substrates. In Escherichia fergusonii (strain ATCC 35469 / DSM 13698 / CCUG 18766 / IAM 14443 / JCM 21226 / LMG 7866 / NBRC 102419 / NCTC 12128 / CDC 0568-73), this protein is DNA-directed RNA polymerase subunit beta.